A 799-amino-acid chain; its full sequence is Elongation factor G, mitochondrial (799 aa).

The transit peptide at 1 to 24 (MRCPSLARLPHRAVSGLTRTPVRF) directs the protein to the mitochondrion. The tr-type G domain maps to 97-384 (SRVRNIGIAA…GVIDYLPNPS (288 aa)). GTP-binding positions include 106-113 (AHIDSGKT), 182-186 (DTPGH), and 236-239 (NKMD).

It belongs to the TRAFAC class translation factor GTPase superfamily. Classic translation factor GTPase family. EF-G/EF-2 subfamily.

Its subcellular location is the mitochondrion. The protein operates within protein biosynthesis; polypeptide chain elongation. Mitochondrial GTPase that catalyzes the GTP-dependent ribosomal translocation step during translation elongation. During this step, the ribosome changes from the pre-translocational (PRE) to the post-translocational (POST) state as the newly formed A-site-bound peptidyl-tRNA and P-site-bound deacylated tRNA move to the P and E sites, respectively. Catalyzes the coordinated movement of the two tRNA molecules, the mRNA and conformational changes in the ribosome. The protein is Elongation factor G, mitochondrial (mef1) of Emericella nidulans (strain FGSC A4 / ATCC 38163 / CBS 112.46 / NRRL 194 / M139) (Aspergillus nidulans).